A 337-amino-acid polypeptide reads, in one-letter code: Glycerol-3-phosphate dehydrogenase [NAD(P)+] (337 aa).

Positions 11, 30, and 113 each coordinate NADPH. Positions 113, 141, and 143 each coordinate sn-glycerol 3-phosphate. Ala-145 contacts NADPH. 5 residues coordinate sn-glycerol 3-phosphate: Lys-196, Asp-249, Ser-259, Arg-260, and Asn-261. The active-site Proton acceptor is the Lys-196. Position 260 (Arg-260) interacts with NADPH. NADPH-binding residues include Val-284 and Glu-286.

Belongs to the NAD-dependent glycerol-3-phosphate dehydrogenase family.

It is found in the cytoplasm. The enzyme catalyses sn-glycerol 3-phosphate + NAD(+) = dihydroxyacetone phosphate + NADH + H(+). The catalysed reaction is sn-glycerol 3-phosphate + NADP(+) = dihydroxyacetone phosphate + NADPH + H(+). Its pathway is membrane lipid metabolism; glycerophospholipid metabolism. Functionally, catalyzes the reduction of the glycolytic intermediate dihydroxyacetone phosphate (DHAP) to sn-glycerol 3-phosphate (G3P), the key precursor for phospholipid synthesis. This Leptothrix cholodnii (strain ATCC 51168 / LMG 8142 / SP-6) (Leptothrix discophora (strain SP-6)) protein is Glycerol-3-phosphate dehydrogenase [NAD(P)+].